The primary structure comprises 203 residues: MTANHQSPGMHSILLLLLLPALTTTFSCNHLRHQDANFSWKSLQLLQNTAPPPPQPCPQQDVTFPFPETLLKSKDKKQAAITTLRILQHLFNMLSSPHTPKHWIDRTRHSLLNQIQHYIHHLEQCFVNQGTRSQRRGPRNAHLSINKYFRSIHNFLQHNNYSACTWDHVRLQARDCFRHVDTLIQWMKSRAPLTASSKRLNTQ.

The signal sequence occupies residues 1–27 (MTANHQSPGMHSILLLLLLPALTTTFS). Disulfide bonds link C28-C125 and C57-C164. 2 N-linked (GlcNAc...) asparagine glycosylation sites follow: N37 and N160.

It belongs to the alpha/beta interferon family.

Its subcellular location is the secreted. Its function is as follows. Has antiviral activities. This chain is Interferon type B (IFNB), found in Gallus gallus (Chicken).